Reading from the N-terminus, the 392-residue chain is MGPWRCLLLLPLLAAAPRAQQQQFMEYVERRLALLEERIAQWHDQSSRYSTELRDFKNQVLGMLETAEKEREALRAEAEGAAARVDRLEREVDYLETQNPAPPCVEVDEVLMEKQAATAKQRKNEKYTKLTDCSDTIASVRAMKILKRFGSSAGLWTKDAAGSSEKIYVFDGTANDTVYIFPRMREFTLFSATRRAARIKLPYPWVGTGHLVYGGYLYYIRQQGPFQVIKFDLANKTVVDSSVFPAEEQIPVFGLSPFTYIELAADEEGLWAIYATKENEKNICLAKLDPDSLDIEQMWDTPCPRENAEGAFVVCGALHVAYNTRLPSRSRVQCVFDVSGTLPPEEASLVYFPKRYGSHSSMKYSPRERQVYAWDDGYQIIYRMEMKKKLEV.

A signal peptide spans 1-21 (MGPWRCLLLLPLLAAAPRAQQ). A coiled-coil region spans residues 25–99 (MEYVERRLAL…REVDYLETQN (75 aa)). Residues 132–388 (DCSDTIASVR…QIIYRMEMKK (257 aa)) form the Olfactomedin-like domain. The cysteines at positions 133 and 315 are disulfide-linked. Residues N175 and N235 are each glycosylated (N-linked (GlcNAc...) asparagine).

Belongs to the OLFML3 family.

The protein resides in the secreted. Secreted scaffold protein that plays an essential role in dorsoventral patterning during early development. Stabilizes axial formation by restricting chordin (CHRD) activity on the dorsal side. Acts by facilitating the association between the tolloid proteases and their substrate chordin (CHRD), leading to enhance chordin (CHRD) degradation. This Gallus gallus (Chicken) protein is Olfactomedin-like protein 3 (OLFML3).